We begin with the raw amino-acid sequence, 165 residues long: 2-C-methyl-D-erythritol 2,4-cyclodiphosphate synthase (165 aa).

A divalent metal cation is bound by residues D8 and H10. Residues 8–10 and 34–35 each bind 4-CDP-2-C-methyl-D-erythritol 2-phosphate; these read DVH and HS. H42 is an a divalent metal cation binding site. Residues 56–58, 61–65, 100–106, 132–135, F139, and R142 each bind 4-CDP-2-C-methyl-D-erythritol 2-phosphate; these read DIG, FPDTD, AQAPKMA, and TTTE.

This sequence belongs to the IspF family. In terms of assembly, homotrimer. Requires a divalent metal cation as cofactor.

It carries out the reaction 4-CDP-2-C-methyl-D-erythritol 2-phosphate = 2-C-methyl-D-erythritol 2,4-cyclic diphosphate + CMP. It participates in isoprenoid biosynthesis; isopentenyl diphosphate biosynthesis via DXP pathway; isopentenyl diphosphate from 1-deoxy-D-xylulose 5-phosphate: step 4/6. Its function is as follows. Involved in the biosynthesis of isopentenyl diphosphate (IPP) and dimethylallyl diphosphate (DMAPP), two major building blocks of isoprenoid compounds. Catalyzes the conversion of 4-diphosphocytidyl-2-C-methyl-D-erythritol 2-phosphate (CDP-ME2P) to 2-C-methyl-D-erythritol 2,4-cyclodiphosphate (ME-CPP) with a corresponding release of cytidine 5-monophosphate (CMP). This is 2-C-methyl-D-erythritol 2,4-cyclodiphosphate synthase from Pectobacterium atrosepticum (strain SCRI 1043 / ATCC BAA-672) (Erwinia carotovora subsp. atroseptica).